The chain runs to 580 residues: Microcin-J25 export ATP-binding/permease protein McjD (580 aa).

The next 6 helical transmembrane spans lie at 25–45 (FFSMLFITSLSSIIISISPLI), 66–86 (VLLACLYMFCVISNKASVFLF), 143–163 (VSQNILSPVIQLISTIVVVLS), 167–187 (WFSAGVFFLYILVFVIFNTRL), 261–281 (AVILFGSVFIYNILGVLNGVV), and 286–306 (FIMITSYIILLSTPVENIGAL). The 288-residue stretch at 25-312 (FFSMLFITSL…IGALLSEIRQ (288 aa)) folds into the ABC transmembrane type-1 domain. An ABC transporter domain is found at 345–578 (LSIRELSFSY…NEYISGLASV (234 aa)). An ATP-binding site is contributed by 378 to 385 (GPSGSGKS).

It belongs to the ABC transporter superfamily. In terms of assembly, homodimer.

The protein localises to the cell inner membrane. Functionally, is able to protect a cell, which harbors the plasmid pTUC100 encoding microcin J25, against microcin J25. Is required for microcin J25 export out of the producing cells. The chain is Microcin-J25 export ATP-binding/permease protein McjD (mcjD) from Escherichia coli.